Reading from the N-terminus, the 274-residue chain is 2,3,4,5-tetrahydropyridine-2,6-dicarboxylate N-succinyltransferase (274 aa).

Positions 106 and 143 each coordinate substrate.

Belongs to the transferase hexapeptide repeat family. Homotrimer.

Its subcellular location is the cytoplasm. The catalysed reaction is (S)-2,3,4,5-tetrahydrodipicolinate + succinyl-CoA + H2O = (S)-2-succinylamino-6-oxoheptanedioate + CoA. It participates in amino-acid biosynthesis; L-lysine biosynthesis via DAP pathway; LL-2,6-diaminopimelate from (S)-tetrahydrodipicolinate (succinylase route): step 1/3. This is 2,3,4,5-tetrahydropyridine-2,6-dicarboxylate N-succinyltransferase from Acidovorax ebreus (strain TPSY) (Diaphorobacter sp. (strain TPSY)).